The chain runs to 240 residues: Serine protease SplB (240 aa).

The signal sequence occupies residues 1–36 (MNKNVVIKSLATLTILTSVTGIGTTLVEEVQQTAKA). Catalysis depends on charge relay system residues His-75, Asp-113, and Ser-193.

Belongs to the peptidase S1B family.

Its subcellular location is the secreted. Functionally, serine protease that cleaves specifically after the sequence Trp-Glu-Leu-Gln. In Staphylococcus aureus (strain Mu3 / ATCC 700698), this protein is Serine protease SplB (splB).